A 208-amino-acid polypeptide reads, in one-letter code: Small ribosomal subunit protein uS4 (208 aa).

Positions 98–161 constitute an S4 RNA-binding domain; sequence RRLDNTIYRL…RQSPIILEAQ (64 aa).

The protein belongs to the universal ribosomal protein uS4 family. As to quaternary structure, part of the 30S ribosomal subunit. Contacts protein S5. The interaction surface between S4 and S5 is involved in control of translational fidelity.

In terms of biological role, one of the primary rRNA binding proteins, it binds directly to 16S rRNA where it nucleates assembly of the body of the 30S subunit. Its function is as follows. With S5 and S12 plays an important role in translational accuracy. The protein is Small ribosomal subunit protein uS4 of Solidesulfovibrio magneticus (strain ATCC 700980 / DSM 13731 / RS-1) (Desulfovibrio magneticus).